The primary structure comprises 73 residues: UPF0499 protein CHGG_06021 (73 aa).

Positions methionine 1–alanine 20 are cleaved as a signal peptide. Intrachain disulfides connect cysteine 41–cysteine 55, cysteine 48–cysteine 60, and cysteine 54–cysteine 69.

Belongs to the UPF0499 family.

The protein resides in the secreted. In Chaetomium globosum (strain ATCC 6205 / CBS 148.51 / DSM 1962 / NBRC 6347 / NRRL 1970) (Soil fungus), this protein is UPF0499 protein CHGG_06021.